Here is a 542-residue protein sequence, read N- to C-terminus: Zinc finger protein 280A (542 aa).

Residues 66–185 (VTPGSNSRRK…RDSKRVKLRD (120 aa)) form a disordered region. A compositionally biased stretch (polar residues) spans 107–122 (EGRSTDSPVTMKSSSE). Positions 128–143 (SSPQVVSPSSSDSLPP) are enriched in low complexity. Positions 161-185 (SSPDSKRLSTSDINSRDSKRVKLRD) are enriched in basic and acidic residues. C2H2-type zinc fingers lie at residues 334 to 357 (TTCQ…DSVH), 364 to 387 (AVCK…KDHH), 423 to 445 (LLCL…CWRH), and 451 to 474 (LQCS…TKDH). The span at 499 to 520 (QPGSSGMASVIVSNTDPQSSPV) shows a compositional bias: polar residues. A disordered region spans residues 499–542 (QPGSSGMASVIVSNTDPQSSPVKTKKKTAMNTRDSRLPCSKDSS).

It localises to the nucleus. Functionally, may function as a transcription factor. The chain is Zinc finger protein 280A (ZNF280A) from Homo sapiens (Human).